We begin with the raw amino-acid sequence, 154 residues long: UPF0178 protein ABC1688 (154 aa).

The protein belongs to the UPF0178 family.

This is UPF0178 protein ABC1688 from Shouchella clausii (strain KSM-K16) (Alkalihalobacillus clausii).